The primary structure comprises 320 residues: Adhesin MafA 1/4 (320 aa).

Residues 1–18 (MRARLLIPILFSVFILSA) form the signal peptide. Cys19 carries the N-palmitoyl cysteine lipid modification. Cys19 carries the S-diacylglycerol cysteine lipid modification. The segment at 287-320 (NHTGNSAPSVEADNSHEGYGYSDEAVRQHRQGQP) is disordered.

Belongs to the MafA family.

The protein localises to the cell outer membrane. The polypeptide is Adhesin MafA 1/4 (mafA1) (Neisseria gonorrhoeae (strain ATCC 700825 / FA 1090)).